Reading from the N-terminus, the 67-residue chain is DNA-directed RNA polymerase subunit omega (67 aa).

This sequence belongs to the RNA polymerase subunit omega family. As to quaternary structure, the RNAP catalytic core consists of 2 alpha, 1 beta, 1 beta' and 1 omega subunit. When a sigma factor is associated with the core the holoenzyme is formed, which can initiate transcription.

It catalyses the reaction RNA(n) + a ribonucleoside 5'-triphosphate = RNA(n+1) + diphosphate. Its function is as follows. Promotes RNA polymerase assembly. Latches the N- and C-terminal regions of the beta' subunit thereby facilitating its interaction with the beta and alpha subunits. This chain is DNA-directed RNA polymerase subunit omega, found in Polaromonas naphthalenivorans (strain CJ2).